A 222-amino-acid chain; its full sequence is 2-C-methyl-D-erythritol 4-phosphate cytidylyltransferase (222 aa).

It belongs to the IspD/TarI cytidylyltransferase family. IspD subfamily.

It carries out the reaction 2-C-methyl-D-erythritol 4-phosphate + CTP + H(+) = 4-CDP-2-C-methyl-D-erythritol + diphosphate. Its pathway is isoprenoid biosynthesis; isopentenyl diphosphate biosynthesis via DXP pathway; isopentenyl diphosphate from 1-deoxy-D-xylulose 5-phosphate: step 2/6. Catalyzes the formation of 4-diphosphocytidyl-2-C-methyl-D-erythritol from CTP and 2-C-methyl-D-erythritol 4-phosphate (MEP). The polypeptide is 2-C-methyl-D-erythritol 4-phosphate cytidylyltransferase (Thermotoga petrophila (strain ATCC BAA-488 / DSM 13995 / JCM 10881 / RKU-1)).